A 333-amino-acid chain; its full sequence is Photosystem II assembly lipoprotein Ycf48 (333 aa).

Residues 1–23 (MKRLLNSATQLLLVLVLGISLSG) form the signal peptide. Residue Cys-24 is the site of N-palmitoyl cysteine attachment. A lipid anchor (S-diacylglycerol cysteine) is attached at Cys-24.

It belongs to the Ycf48 family. Part of early PSII assembly complexes which includes D1 (psbA) and PsbI; not found in mature PSII. Binds to the lumenal side of PSII complexes. Interacts with YidC.

It localises to the cellular thylakoid membrane. A factor required for optimal assembly of photosystem II (PSII), acting in the early stages of PSII assembly. Also plays a role in replacement of photodamaged D1 (psbA). Assists YidC in synthesis of chlorophyll-binding proteins. The polypeptide is Photosystem II assembly lipoprotein Ycf48 (Synechococcus sp. (strain CC9605)).